The following is a 113-amino-acid chain: Flagellar hook-basal body complex protein FliE (113 aa).

This sequence belongs to the FliE family.

It localises to the bacterial flagellum basal body. The sequence is that of Flagellar hook-basal body complex protein FliE from Burkholderia mallei (strain NCTC 10247).